We begin with the raw amino-acid sequence, 670 residues long: Transcription factor Ken 2 (670 aa).

Residues 108–176 (TDLLLICDGK…LYSGQVYVRS (69 aa)) form the BTB domain. Disordered stretches follow at residues 200-288 (SDGS…DRDR) and 307-470 (NNHP…SDDA). Residues 218-230 (NRNTEGITGSSVV) show a composition bias toward polar residues. A compositionally biased stretch (basic residues) spans 325–338 (HHLHHHHHHHHRQL). Composition is skewed to gly residues over residues 351–368 (GGGS…GESG) and 389–400 (SGGGGAGSGRRS). Positions 407–419 (EPAEDDEDYELDV) are enriched in acidic residues. Over residues 451–464 (SDPVNLSIVKQQQD) the composition is skewed to polar residues. The segment at 586-594 (NLKTHLRVH) adopts a C2H2-type 1; degenerate zinc-finger fold. 2 consecutive C2H2-type zinc fingers follow at residues 600 to 623 (FACR…CSVH) and 636 to 658 (YTCC…LSGH).

It is found in the nucleus. In terms of biological role, transcription factor required for terminalia development. Negative regulator of the JAK/STAT pathway: represses JAK/STAT-dependent expression of ventral veins lacking (vvl) in the posterior spiracles. This is Transcription factor Ken 2 from Culex quinquefasciatus (Southern house mosquito).